The sequence spans 216 residues: MEKTVYSVEGVALRSVELDESVFGLSVNRGVIYYAINSELSNKRLGTACTKGRSEVHGSNTKPYKQKGTGRARRGDKKSPLLVGGGTIFGPKPRDFHYALPKKVKRLAMKSLLSLKAQGDALTVIEDFTVESGKTRDLIQVLRHFAQRERTVFILQNDDALLKRAGRNIPTLSFLSYNRLRAHDLFYGRKVLVLETAVHKIADFYRSKDAAQDGTY.

A disordered region spans residues lysine 51–lysine 78. Residues tyrosine 64–aspartate 76 are compositionally biased toward basic residues.

It belongs to the universal ribosomal protein uL4 family. Part of the 50S ribosomal subunit.

One of the primary rRNA binding proteins, this protein initially binds near the 5'-end of the 23S rRNA. It is important during the early stages of 50S assembly. It makes multiple contacts with different domains of the 23S rRNA in the assembled 50S subunit and ribosome. Functionally, forms part of the polypeptide exit tunnel. This is Large ribosomal subunit protein uL4 from Treponema pallidum (strain Nichols).